The following is a 145-amino-acid chain: Transcriptional regulator MraZ (145 aa).

SpoVT-AbrB domains follow at residues 5–49 (TYNH…LESE) and 78–121 (TYKV…AKEV).

Belongs to the MraZ family. As to quaternary structure, forms oligomers.

The protein resides in the cytoplasm. It localises to the nucleoid. This Ureaplasma urealyticum serovar 10 (strain ATCC 33699 / Western) protein is Transcriptional regulator MraZ.